The chain runs to 632 residues: tRNA uridine 5-carboxymethylaminomethyl modification enzyme MnmG (632 aa).

FAD is bound by residues 13–18 (GGGHAG), valine 125, and serine 180. Position 273 to 287 (273 to 287 (GPRYCPSIEDKVVRF)) interacts with NAD(+). Residue glutamine 370 coordinates FAD.

This sequence belongs to the MnmG family. In terms of assembly, homodimer. Heterotetramer of two MnmE and two MnmG subunits. The cofactor is FAD.

Its subcellular location is the cytoplasm. Its function is as follows. NAD-binding protein involved in the addition of a carboxymethylaminomethyl (cmnm) group at the wobble position (U34) of certain tRNAs, forming tRNA-cmnm(5)s(2)U34. This chain is tRNA uridine 5-carboxymethylaminomethyl modification enzyme MnmG, found in Nitrosospira multiformis (strain ATCC 25196 / NCIMB 11849 / C 71).